A 170-amino-acid chain; its full sequence is Large ribosomal subunit protein bL9 (170 aa).

A disordered region spans residues 149–170 (RTEEADAEESAAEEPAVEEAAE). A compositionally biased stretch (acidic residues) spans 153–170 (ADAEESAAEEPAVEEAAE).

Belongs to the bacterial ribosomal protein bL9 family.

In terms of biological role, binds to the 23S rRNA. The sequence is that of Large ribosomal subunit protein bL9 from Oleidesulfovibrio alaskensis (strain ATCC BAA-1058 / DSM 17464 / G20) (Desulfovibrio alaskensis).